Reading from the N-terminus, the 193-residue chain is Putative nucleotidase YqfW (193 aa).

Belongs to the 5'(3')-deoxyribonucleotidase family.

This Bacillus subtilis (strain 168) protein is Putative nucleotidase YqfW (yqfW).